A 230-amino-acid polypeptide reads, in one-letter code: Thiamine-triphosphatase (230 aa).

Ala2 carries the post-translational modification N-acetylalanine. The CYTH domain occupies 5-201 (LIEVERKFLP…AKLIVYLQRF (197 aa)). Residues Glu7 and Glu9 each contribute to the Mg(2+) site. Residues Lys11, Arg55, Arg57, Lys65, and Arg125 each coordinate substrate. Residues Asp145, Glu157, and Glu159 each contribute to the Mg(2+) site. Residue Glu157 coordinates substrate. Residue Lys193 coordinates substrate.

This sequence belongs to the ThTPase family. Monomer. The cofactor is Mg(2+).

Its subcellular location is the cytoplasm. The enzyme catalyses thiamine triphosphate + H2O = thiamine diphosphate + phosphate + H(+). Hydrolase highly specific for thiamine triphosphate (ThTP). This chain is Thiamine-triphosphatase (THTPA), found in Macaca fascicularis (Crab-eating macaque).